A 336-amino-acid polypeptide reads, in one-letter code: Tryptophan--tRNA ligase (336 aa).

Residues glutamine 9 to serine 11 and glycine 17 to asparagine 18 contribute to the ATP site. Residues proline 10–asparagine 18 carry the 'HIGH' region motif. Aspartate 134 lines the L-tryptophan pocket. Residues glycine 146–aspartate 148, isoleucine 189, and lysine 198–serine 202 each bind ATP. The 'KMSKS' region motif lies at lysine 198 to serine 202.

Belongs to the class-I aminoacyl-tRNA synthetase family. Homodimer.

It is found in the cytoplasm. The catalysed reaction is tRNA(Trp) + L-tryptophan + ATP = L-tryptophyl-tRNA(Trp) + AMP + diphosphate + H(+). Functionally, catalyzes the attachment of tryptophan to tRNA(Trp). The protein is Tryptophan--tRNA ligase of Enterococcus faecalis (strain ATCC 700802 / V583).